The following is a 430-amino-acid chain: Serine hydroxymethyltransferase (430 aa).

(6S)-5,6,7,8-tetrahydrofolate is bound by residues Leu-126 and Gly-130–Leu-132. The residue at position 235 (Lys-235) is an N6-(pyridoxal phosphate)lysine.

The protein belongs to the SHMT family. As to quaternary structure, homodimer. Pyridoxal 5'-phosphate is required as a cofactor.

It localises to the cytoplasm. The enzyme catalyses (6R)-5,10-methylene-5,6,7,8-tetrahydrofolate + glycine + H2O = (6S)-5,6,7,8-tetrahydrofolate + L-serine. The protein operates within one-carbon metabolism; tetrahydrofolate interconversion. It functions in the pathway amino-acid biosynthesis; glycine biosynthesis; glycine from L-serine: step 1/1. Its function is as follows. Catalyzes the reversible interconversion of serine and glycine with tetrahydrofolate (THF) serving as the one-carbon carrier. This reaction serves as the major source of one-carbon groups required for the biosynthesis of purines, thymidylate, methionine, and other important biomolecules. Also exhibits THF-independent aldolase activity toward beta-hydroxyamino acids, producing glycine and aldehydes, via a retro-aldol mechanism. This is Serine hydroxymethyltransferase from Leifsonia xyli subsp. xyli (strain CTCB07).